The following is a 431-amino-acid chain: Glutamate-1-semialdehyde 2,1-aminomutase (431 aa).

Lysine 269 bears the N6-(pyridoxal phosphate)lysine mark.

The protein belongs to the class-III pyridoxal-phosphate-dependent aminotransferase family. HemL subfamily. In terms of assembly, homodimer. Pyridoxal 5'-phosphate is required as a cofactor.

The protein localises to the cytoplasm. The catalysed reaction is (S)-4-amino-5-oxopentanoate = 5-aminolevulinate. The protein operates within porphyrin-containing compound metabolism; protoporphyrin-IX biosynthesis; 5-aminolevulinate from L-glutamyl-tRNA(Glu): step 2/2. This Francisella tularensis subsp. tularensis (strain WY96-3418) protein is Glutamate-1-semialdehyde 2,1-aminomutase.